We begin with the raw amino-acid sequence, 484 residues long: Transcription factor TGAL4 (484 aa).

Positions Met-1–Pro-11 are enriched in polar residues. Disordered stretches follow at residues Met-1–Phe-22, Ala-84–Ser-137, and Gln-155–Thr-181. Low complexity predominate over residues Ser-123 to Ser-137. Residues Ala-163–Thr-173 are compositionally biased toward polar residues. Residues Asp-178–Arg-222 enclose the bZIP domain. The basic motif stretch occupies residues Lys-180–Lys-200. A leucine-zipper region spans residues Leu-206–Ile-220. Residues Ala-241–Arg-455 enclose the DOG1 domain.

It belongs to the bZIP family. In terms of assembly, interacts with NPR1/NH1 and NPR3/NH3.

It localises to the nucleus. Transcriptional regulator involved in defense response. This chain is Transcription factor TGAL4, found in Oryza sativa subsp. japonica (Rice).